A 155-amino-acid polypeptide reads, in one-letter code: Large ribosomal subunit protein uL22 (155 aa).

Belongs to the universal ribosomal protein uL22 family. Part of the 50S ribosomal subunit.

In terms of biological role, this protein binds specifically to 23S rRNA. It makes multiple contacts with different domains of the 23S rRNA in the assembled 50S subunit and ribosome. Its function is as follows. The globular domain of the protein is located near the polypeptide exit tunnel on the outside of the subunit, while an extended beta-hairpin is found that lines the wall of the exit tunnel in the center of the 70S ribosome. This Pyrococcus furiosus (strain ATCC 43587 / DSM 3638 / JCM 8422 / Vc1) protein is Large ribosomal subunit protein uL22.